The primary structure comprises 465 residues: Putative subtilisin-like proteinase 1 (465 aa).

The N-terminal stretch at 1–17 (MILAIISLSVVICREVS) is a signal peptide. The 72-residue stretch at 19–90 (YIVMFDQDPS…VKMVVKDSPV (72 aa)) folds into the Inhibitor I9 domain. The region spanning 115–447 (PWGLARVGGS…PSLFNANKKK (333 aa)) is the Peptidase S8 domain. Active-site charge relay system residues include D148 and H180. A disulfide bridge connects residues C329 and C360. Residue S386 is the Charge relay system of the active site.

Belongs to the peptidase S8 family.

It localises to the secreted. The protein localises to the extracellular space. Functionally, may be involved in the degradation of proteins for nutrient acquisition or possess a regulatory function by proteolytic activation of proproteins. The sequence is that of Putative subtilisin-like proteinase 1 (SPL1) from Encephalitozoon cuniculi (strain GB-M1) (Microsporidian parasite).